The chain runs to 182 residues: Isopentenyl-diphosphate Delta-isomerase (182 aa).

Residues histidine 25 and histidine 32 each coordinate Mn(2+). In terms of domain architecture, Nudix hydrolase spans 30–164; the sequence is PLHLAFSCWL…PWAFSPWMVM (135 aa). Residue cysteine 67 is part of the active site. Residue histidine 69 participates in Mn(2+) binding. Glutamate 87 contributes to the Mg(2+) binding site. Mn(2+) is bound by residues glutamate 114 and glutamate 116. Residue glutamate 116 is part of the active site.

This sequence belongs to the IPP isomerase type 1 family. Homodimer. Requires Mg(2+) as cofactor. The cofactor is Mn(2+).

It localises to the cytoplasm. It catalyses the reaction isopentenyl diphosphate = dimethylallyl diphosphate. The protein operates within isoprenoid biosynthesis; dimethylallyl diphosphate biosynthesis; dimethylallyl diphosphate from isopentenyl diphosphate: step 1/1. Its function is as follows. Catalyzes the 1,3-allylic rearrangement of the homoallylic substrate isopentenyl (IPP) to its highly electrophilic allylic isomer, dimethylallyl diphosphate (DMAPP). The sequence is that of Isopentenyl-diphosphate Delta-isomerase from Salmonella arizonae (strain ATCC BAA-731 / CDC346-86 / RSK2980).